The primary structure comprises 254 residues: Geranylgeranylglyceryl phosphate synthase (254 aa).

Asp-28 and Ser-53 together coordinate Mg(2+). Sn-glycerol 1-phosphate is bound by residues 172 to 178 (YLEAGSG), 203 to 204 (GG), and 225 to 226 (GT).

Belongs to the GGGP/HepGP synthase family. Group II subfamily. Mg(2+) is required as a cofactor.

The protein localises to the cytoplasm. The catalysed reaction is sn-glycerol 1-phosphate + (2E,6E,10E)-geranylgeranyl diphosphate = sn-3-O-(geranylgeranyl)glycerol 1-phosphate + diphosphate. The protein operates within membrane lipid metabolism; glycerophospholipid metabolism. Prenyltransferase that catalyzes the transfer of the geranylgeranyl moiety of geranylgeranyl diphosphate (GGPP) to the C3 hydroxyl of sn-glycerol-1-phosphate (G1P). This reaction is the first ether-bond-formation step in the biosynthesis of archaeal membrane lipids. This Methanococcus vannielii (strain ATCC 35089 / DSM 1224 / JCM 13029 / OCM 148 / SB) protein is Geranylgeranylglyceryl phosphate synthase.